Reading from the N-terminus, the 307-residue chain is Ribosomal RNA small subunit methyltransferase H (307 aa).

Residues 34-36 (GGH), Asp-54, Phe-79, Asp-101, and Gln-108 contribute to the S-adenosyl-L-methionine site.

This sequence belongs to the methyltransferase superfamily. RsmH family.

The protein localises to the cytoplasm. It carries out the reaction cytidine(1402) in 16S rRNA + S-adenosyl-L-methionine = N(4)-methylcytidine(1402) in 16S rRNA + S-adenosyl-L-homocysteine + H(+). Functionally, specifically methylates the N4 position of cytidine in position 1402 (C1402) of 16S rRNA. This chain is Ribosomal RNA small subunit methyltransferase H, found in Vesicomyosocius okutanii subsp. Calyptogena okutanii (strain HA).